Reading from the N-terminus, the 325-residue chain is Protease HtpX homolog 2 (325 aa).

Transmembrane regions (helical) follow at residues 17-37 (IAILVLGFALIYGILGYFFGF) and 42-62 (LLITGALAFVTIFTILQWLFG). A Zn(2+)-binding site is contributed by His146. Glu147 is an active-site residue. His150 is a Zn(2+) binding site. Helical transmembrane passes span 158-178 (LLLAVGLIPTLLYWIGYGLWW) and 195-215 (ILFLIGIALIAFSFLFNLFVL). Glu222 is a binding site for Zn(2+).

Belongs to the peptidase M48B family. It depends on Zn(2+) as a cofactor.

It is found in the cell membrane. In Sulfurisphaera tokodaii (strain DSM 16993 / JCM 10545 / NBRC 100140 / 7) (Sulfolobus tokodaii), this protein is Protease HtpX homolog 2.